The primary structure comprises 550 residues: ATP synthase subunit alpha (550 aa).

172–179 serves as a coordination point for ATP; the sequence is GDRKTGKT. The tract at residues 514–550 is disordered; it reads EDEQRVNEPPAKPLAGEENRETVTRFRDGTTDRPAES. Residues 528–550 show a composition bias toward basic and acidic residues; that stretch reads AGEENRETVTRFRDGTTDRPAES.

Belongs to the ATPase alpha/beta chains family. As to quaternary structure, F-type ATPases have 2 components, CF(1) - the catalytic core - and CF(0) - the membrane proton channel. CF(1) has five subunits: alpha(3), beta(3), gamma(1), delta(1), epsilon(1). CF(0) has three main subunits: a(1), b(2) and c(9-12). The alpha and beta chains form an alternating ring which encloses part of the gamma chain. CF(1) is attached to CF(0) by a central stalk formed by the gamma and epsilon chains, while a peripheral stalk is formed by the delta and b chains.

It is found in the cell membrane. The catalysed reaction is ATP + H2O + 4 H(+)(in) = ADP + phosphate + 5 H(+)(out). Its function is as follows. Produces ATP from ADP in the presence of a proton gradient across the membrane. The alpha chain is a regulatory subunit. The polypeptide is ATP synthase subunit alpha (Salinispora arenicola (strain CNS-205)).